A 605-amino-acid polypeptide reads, in one-letter code: Podocalyxin-like protein 2 (605 aa).

The signal sequence occupies residues 1–32; that stretch reads MGRLLRAARLPPLLSPLLLLLVGGAFLGACVA. Residues 33–500 lie on the Extracellular side of the membrane; that stretch reads GSDEPGPEGL…ASQVRSDYGT (468 aa). An O-linked (Xyl...) (chondroitin sulfate) serine glycan is attached at Ser-79. Residues Tyr-97 and Tyr-118 each carry the sulfotyrosine modification. Residues 129 to 134 are O-glycosylated at one site; that stretch reads SIEDTS. Residues 129-347 form a disordered region; that stretch reads SIEDTSQAQE…PGDMELTPSS (219 aa). Ser-144 carries an O-linked (GalNAc...) serine glycan. Over residues 162–189 the composition is skewed to acidic residues; it reads EEEEEEEEEEEREKEEVEKQEEEEEEEL. N-linked (GlcNAc...) asparagine glycosylation occurs at Asn-193. The segment covering 207–217 has biased composition (polar residues); it reads SLTSSSQTPGA. Composition is skewed to low complexity over residues 241–255 and 288–298; these read PSLL…TVTP and EATAGAAGLSG. N-linked (GlcNAc...) asparagine glycosylation occurs at Asn-395. The helical transmembrane segment at 501–521 threads the bilayer; sequence LFVVLVVIGAICIIIIALGLL. Topologically, residues 522 to 605 are cytoplasmic; it reads YNCWQRRLPK…SDVFEEDTHL (84 aa). The disordered stretch occupies residues 554–605; that stretch reads LDVASDSQSEMQEKHPSLNGGGALNGPGSWGALMGGKRDPEDSDVFEEDTHL. At Ser-570 the chain carries Phosphoserine. A compositionally biased stretch (gly residues) spans 572 to 582; that stretch reads NGGGALNGPGS. Residues 594 to 605 are compositionally biased toward acidic residues; that stretch reads EDSDVFEEDTHL. Phosphoserine is present on Ser-596.

This sequence belongs to the podocalyxin family. Homodimer; disulfide-linked. Interacts with SELL, SELE and SELP. In terms of processing, O-glycosylated; contains chondroitin sulfate. Displays sialylated O-linked oligosaccharides. Sulfation is necessary for interaction with SELL. Sialylated O-linked oligosaccharides are necessary for interaction with SELL, SELE and SELP. In terms of tissue distribution, expressed in T-cells, B-cells and monocytes. Expression is higher on memory and germinal center cells than on naive B-cells (at protein level). Highly expressed in brain. Moderately expressed in pancreas, kidney and lymphoid node. Weakly expressed in liver. Detected in both endothelial cells and CD34+ bone marrow cells.

The protein resides in the membrane. Acts as a ligand for vascular selectins. Mediates rapid rolling of leukocytes over vascular surfaces through high affinity divalent cation-dependent interactions with E-, P- and L-selectins. This Homo sapiens (Human) protein is Podocalyxin-like protein 2 (PODXL2).